Consider the following 522-residue polypeptide: BTB/POZ domain-containing protein 3 (522 aa).

The BTB domain occupies 120-190 (ADVHFVVGPP…IYCDEIDLAA (71 aa)). The region spanning 235 to 300 (FEEPDLTQRC…NWAEVECQRQ (66 aa)) is the BACK domain.

In terms of tissue distribution, strongly expressed in the primary visual cortex.

The protein localises to the cytoplasm. The protein resides in the cytosol. It localises to the nucleus. Its function is as follows. Acts as a key regulator of dendritic field orientation during development of sensory cortex. Also directs dendrites toward active axon terminals when ectopically expressed. This is BTB/POZ domain-containing protein 3 (BTBD3) from Callithrix jacchus (White-tufted-ear marmoset).